Here is a 425-residue protein sequence, read N- to C-terminus: Serine hydroxymethyltransferase (425 aa).

(6S)-5,6,7,8-tetrahydrofolate is bound at residue 132 to 134; it reads GHL. Lys237 is subject to N6-(pyridoxal phosphate)lysine.

The protein belongs to the SHMT family. Homodimer. Requires pyridoxal 5'-phosphate as cofactor.

The protein localises to the cytoplasm. It carries out the reaction (6R)-5,10-methylene-5,6,7,8-tetrahydrofolate + glycine + H2O = (6S)-5,6,7,8-tetrahydrofolate + L-serine. The protein operates within one-carbon metabolism; tetrahydrofolate interconversion. Its pathway is amino-acid biosynthesis; glycine biosynthesis; glycine from L-serine: step 1/1. Its function is as follows. Catalyzes the reversible interconversion of serine and glycine with tetrahydrofolate (THF) serving as the one-carbon carrier. This reaction serves as the major source of one-carbon groups required for the biosynthesis of purines, thymidylate, methionine, and other important biomolecules. Also exhibits THF-independent aldolase activity toward beta-hydroxyamino acids, producing glycine and aldehydes, via a retro-aldol mechanism. In Wolbachia sp. subsp. Brugia malayi (strain TRS), this protein is Serine hydroxymethyltransferase.